An 886-amino-acid polypeptide reads, in one-letter code: Protein O-mannosyltransferase 1 (886 aa).

Composition is skewed to polar residues over residues 1 to 10 and 18 to 34; these read MSATYTNTIT and VRQQQQHQWTGSDLSGE. Disordered regions lie at residues 1 to 37 and 88 to 161; these read MSATYTNTITQRRKTAKVRQQQQHQWTGSDLSGESNE and RGSV…KTAN. A compositionally biased stretch (low complexity) spans 105 to 139; it reads PTPVATPKQASPSPTSDRSRSLSRSPSPSRSRSLS. Asn-161 and Asn-242 each carry an N-linked (GlcNAc...) asparagine glycan. 4 helical membrane-spanning segments follow: residues 256–276, 310–330, 349–369, and 398–418; these read MPIFWFRFLPAMCGSLLAPAV, VLMESMLLLATTVGIACLLRF, VCLGAAGTVKYVGFLALGLAF, and LLIFVGIPLAVYLGVFYIHFK. MIR domains are found at residues 450-511, 522-579, and 585-642; these read PLAV…VKRP, PDII…VEIL, and GDIW…VEEH. Transmembrane regions (helical) follow at residues 727–747, 791–811, and 835–855; these read ILLWYTATMGILVYAGLLAFY, LFLHNYLPAFVFKLLLLCFVV, and LMLILWLVGVLSIFSKFIPFS.

Belongs to the glycosyltransferase 39 family. In terms of assembly, interacts with tw/POMT2. As to expression, at the cellular blastoderm stage, expression accumulates in the ventrally located mesoderm primordium. At germ band extension, mesoderm expression is seen as stripes of strong expression. A very strong signal is also detected in the invaginating gut. As the germ band retracts, mesodermal expression decays and becomes restricted to somatic muscle precursors. After dorsal closure, expression has disappeared from the mesoderm and remains in the endoderm. Some expression is detected in a few cells of the head and the pharyngeal muscles.

It is found in the endoplasmic reticulum membrane. It catalyses the reaction a di-trans,poly-cis-dolichyl beta-D-mannosyl phosphate + L-seryl-[protein] = 3-O-(alpha-D-mannosyl)-L-seryl-[protein] + a di-trans,poly-cis-dolichyl phosphate + H(+). The catalysed reaction is a di-trans,poly-cis-dolichyl beta-D-mannosyl phosphate + L-threonyl-[protein] = 3-O-(alpha-D-mannosyl)-L-threonyl-[protein] + a di-trans,poly-cis-dolichyl phosphate + H(+). The protein operates within protein modification; protein glycosylation. Its function is as follows. Rt/POMT1 and tw/POMT2 function as a protein O-mannosyltransferase in association with each other to generate and maintain normal muscle development. In Drosophila melanogaster (Fruit fly), this protein is Protein O-mannosyltransferase 1.